The following is a 708-amino-acid chain: Exocyst complex component 5 (708 aa).

At A2 the chain carries N-acetylalanine. Residues 40–101 (KRLLEEFVNH…AFQHFQELDE (62 aa)) are a coiled coil. A phosphothreonine mark is found at T122, T395, and T405. A Phosphoserine modification is found at S412.

It belongs to the SEC10 family. As to quaternary structure, the exocyst complex is composed of EXOC1, EXOC2, EXOC3, EXOC4, EXOC5, EXOC6, EXOC7 and EXOC8. Interacts with EXOC3L1. As to expression, ubiquitous.

The protein resides in the cytoplasm. It localises to the midbody. Component of the exocyst complex involved in the docking of exocytic vesicles with fusion sites on the plasma membrane. The chain is Exocyst complex component 5 (Exoc5) from Rattus norvegicus (Rat).